The sequence spans 77 residues: Translation initiation factor IF-1, chloroplastic (77 aa).

The 71-residue stretch at methionine 1–arginine 71 folds into the S1-like domain.

Belongs to the IF-1 family. In terms of assembly, component of the 30S ribosomal translation pre-initiation complex which assembles on the 30S ribosome in the order IF-2 and IF-3, IF-1 and N-formylmethionyl-tRNA(fMet); mRNA recruitment can occur at any time during PIC assembly.

The protein localises to the plastid. Its subcellular location is the chloroplast. In terms of biological role, one of the essential components for the initiation of protein synthesis. Stabilizes the binding of IF-2 and IF-3 on the 30S subunit to which N-formylmethionyl-tRNA(fMet) subsequently binds. Helps modulate mRNA selection, yielding the 30S pre-initiation complex (PIC). Upon addition of the 50S ribosomal subunit IF-1, IF-2 and IF-3 are released leaving the mature 70S translation initiation complex. This Cercidiphyllum japonicum (Katsura tree) protein is Translation initiation factor IF-1, chloroplastic.